Consider the following 383-residue polypeptide: Putative protein FAM157A (383 aa).

2 disordered regions span residues 1–21 (MGPL…PLPK) and 177–254 (ATAR…PLGR).

The protein belongs to the FAM157 family.

In Homo sapiens (Human), this protein is Putative protein FAM157A (FAM157A).